A 387-amino-acid chain; its full sequence is Fetuin-B (387 aa).

Residues 1-18 form the signal peptide; the sequence is MNVLLLLVLCTLAMGCGA. 2 consecutive Cystatin fetuin-B-type domains span residues 25 to 139 and 150 to 258; these read AARP…YNCT and MTCP…VTCS. N-linked (GlcNAc...) asparagine glycosylation occurs at asparagine 37. Cystine bridges form between cysteine 94-cysteine 105, cysteine 118-cysteine 138, cysteine 152-cysteine 155, cysteine 217-cysteine 225, and cysteine 238-cysteine 257. N-linked (GlcNAc...) asparagine glycosylation is present at asparagine 137. The disordered stretch occupies residues 264–306; sequence APTPRGENATVNQRPANPSKTEELQQQNTAPTNSPTKAVPKGS. Asparagine 271 is a glycosylation site (N-linked (GlcNAc...) asparagine). The segment covering 272–299 has biased composition (polar residues); the sequence is ATVNQRPANPSKTEELQQQNTAPTNSPT. O-linked (GalNAc...) threonine glycosylation is found at threonine 292 and threonine 295. Serine 320 carries the post-translational modification Phosphoserine. A disordered region spans residues 366-387; sequence KEQRSAECPGPAQKGYPFILPS.

The protein belongs to the fetuin family. In terms of tissue distribution, liver and testis.

It localises to the secreted. Functionally, protease inhibitor required for egg fertilization. Required to prevent premature zona pellucida hardening before fertilization, probably by inhibiting the protease activity of ASTL, a protease that mediates the cleavage of ZP2 and triggers zona pellucida hardening. The chain is Fetuin-B (FETUB) from Bos taurus (Bovine).